Consider the following 102-residue polypeptide: Membrane-bound protein LytA (102 aa).

The first 16 residues, 1–16 (MKKFIALLFFILLLSG), serve as a signal peptide directing secretion. A lipid anchor (N-palmitoyl cysteine) is attached at Cys-17. The S-diacylglycerol cysteine moiety is linked to residue Cys-17.

It localises to the cell membrane. Its function is as follows. Possible role in the secretion of LytB and LytC. This is Membrane-bound protein LytA (lytA) from Bacillus subtilis (strain 168).